The chain runs to 261 residues: Glucose 1-dehydrogenase 4 (261 aa).

11–35 (VITGGSTGLGRAMAVRFGQEEAKVV) contacts NAD(+). Serine 145 contributes to the substrate binding site. Tyrosine 158 acts as the Proton acceptor in catalysis.

Belongs to the short-chain dehydrogenases/reductases (SDR) family. Homotetramer.

It catalyses the reaction D-glucose + NAD(+) = D-glucono-1,5-lactone + NADH + H(+). It carries out the reaction D-glucose + NADP(+) = D-glucono-1,5-lactone + NADPH + H(+). The polypeptide is Glucose 1-dehydrogenase 4 (gdhIV) (Priestia megaterium (Bacillus megaterium)).